A 390-amino-acid polypeptide reads, in one-letter code: E3 ubiquitin-protein ligase At4g11680 (390 aa).

Positions 1–19 (MSSSSSTTTNTTTESDSSS) are enriched in low complexity. The segment at 1 to 39 (MSSSSSTTTNTTTESDSSSLPTHIGRSNSDGIIDTTPFL) is disordered. 5 helical membrane-spanning segments follow: residues 109–129 (VVFL…AVLI), 142–162 (VWVV…CVEY), 212–232 (MFSF…GQTL), 244–264 (IIFL…ACVI), and 265–285 (GLAV…VADQ). Residues 338-379 (CCICLCEYEDGVELRELPCNHHFHCTCIDKWLHINSRCPLCK) form an RING-type; atypical zinc finger.

Its subcellular location is the membrane. The enzyme catalyses S-ubiquitinyl-[E2 ubiquitin-conjugating enzyme]-L-cysteine + [acceptor protein]-L-lysine = [E2 ubiquitin-conjugating enzyme]-L-cysteine + N(6)-ubiquitinyl-[acceptor protein]-L-lysine.. It functions in the pathway protein modification; protein ubiquitination. Functionally, mediates E2-dependent protein ubiquitination in vitro. In Arabidopsis thaliana (Mouse-ear cress), this protein is E3 ubiquitin-protein ligase At4g11680.